Consider the following 792-residue polypeptide: Probable G-protein coupled receptor 156 (792 aa).

At 1 to 49 (MEPEINCSEFCDSFPGQELDRRPLHDLCKTTITDSQHGSADISPLSPAL) the chain is on the extracellular side. Asn-6 carries an N-linked (GlcNAc...) asparagine glycan. Residues 50-70 (LGVIWTFLSCGLLLVLFFLAF) form a helical membrane-spanning segment. Residues 71 to 86 (TIRCRKNRIVKMSSPN) are Cytoplasmic-facing. The chain crosses the membrane as a helical span at residues 87–107 (LNIVTLLGSCLTYSSAYLFGI). Over 108-118 (QDALVGSSVEA) the chain is Extracellular. A helical transmembrane segment spans residues 119 to 139 (LIQTRLSLLCIGTTLVFGPIL). Residues 140–164 (GKSWRLYKVFTQRVPDKRVIIKDLQ) are Cytoplasmic-facing. A helical transmembrane segment spans residues 165–185 (LLGLVAALVVADVILLVTWVL). The Extracellular segment spans residues 186-222 (TDPIQCLQILGVSMKVTGRDVSCSLTNTHFCASRYSD). The helical transmembrane segment at 223-243 (VWIALVLGCKGLLLLYGAYLA) threads the bilayer. The Cytoplasmic portion of the chain corresponds to 244-257 (GLTNHVSSPPVNQS). The helical transmembrane segment at 258-278 (LTIMVGVNLLLLTAGLLFVVT) threads the bilayer. Over 279 to 287 (RYLHSWPNL) the chain is Extracellular. A helical membrane pass occupies residues 288–308 (VFGLTSGGIFVCTTTVNCCVF). Topologically, residues 309–792 (LPQLRQRKAF…FKDDLKPTLV (484 aa)) are cytoplasmic. The stretch at 354 to 390 (EXSCMERLLTEKNAVIESLQEQVSNAKEKLVKLMSAE) forms a coiled coil. Disordered regions lie at residues 407–457 (GGPA…KYDM), 469–516 (GCSQ…EVLP), and 538–704 (DLGT…QRQP). A compositionally biased stretch (low complexity) spans 422-434 (AAAEDSLPASAAS). Basic and acidic residues-rich tracts occupy residues 443–457 (SRRDXSPSPDQKYDM) and 474–486 (PKAEQSEGPERGN). Residues 554 to 567 (PWKSNTSGSPQKLS) show a composition bias toward polar residues. A compositionally biased stretch (basic residues) spans 578–589 (VRRRRAAQRARS). Over residues 602 to 619 (QANNTVSGSQNGLIVQNR) the composition is skewed to polar residues. A compositionally biased stretch (basic and acidic residues) spans 620 to 635 (DSPRLDHHNARSKEPR). The segment covering 675–704 (PRQPSASAPAQSSTAPCLSSXPALPRQRQP) has biased composition (low complexity).

The protein belongs to the G-protein coupled receptor 3 family. GABA-B receptor subfamily. As to expression, widely expressed throughout the brain and is particularly dense in the olfactory tubercles, islands of Calleja, nucleus accumbens, piriform cortex and all fields of the hippocampus.

Its subcellular location is the cell membrane. In terms of biological role, orphan G-protein coupled receptor involved in the regulation of hair cell orientation in mechanosensory organs of the inner ear. It is required to trigger a 180 degree reversal in hair cell orientation, creating a virtual line of polarity reversal (LPR) across which stereociliary bundles are arranged in opposite orientations. This is Probable G-protein coupled receptor 156 (Gpr156) from Rattus norvegicus (Rat).